The sequence spans 187 residues: Elongation factor P (187 aa).

Belongs to the elongation factor P family.

The protein localises to the cytoplasm. It participates in protein biosynthesis; polypeptide chain elongation. In terms of biological role, involved in peptide bond synthesis. Stimulates efficient translation and peptide-bond synthesis on native or reconstituted 70S ribosomes in vitro. Probably functions indirectly by altering the affinity of the ribosome for aminoacyl-tRNA, thus increasing their reactivity as acceptors for peptidyl transferase. The chain is Elongation factor P from Rhizorhabdus wittichii (strain DSM 6014 / CCUG 31198 / JCM 15750 / NBRC 105917 / EY 4224 / RW1) (Sphingomonas wittichii).